A 380-amino-acid polypeptide reads, in one-letter code: RNA binding protein fox-1 homolog 2 (380 aa).

Polar residues-rich tracts occupy residues 1–20 (MEKN…TPDT) and 36–56 (NGLS…QSTE). A disordered region spans residues 1 to 117 (MEKNKMVSQG…TPKRLHVSNI (117 aa)). Low complexity predominate over residues 72–102 (STPATSTANASSTTDGSQTEGQQSQTQNSEN). One can recognise an RRM domain in the interval 110–186 (KRLHVSNIPF…RKIEVNNATA (77 aa)).

Its subcellular location is the nucleus. It is found in the cytoplasm. Functionally, RNA-binding protein that regulates alternative splicing events by binding to 5'-UGCAUGU-3' elements. Regulates alternative splicing of tissue-specific exons. This Xenopus tropicalis (Western clawed frog) protein is RNA binding protein fox-1 homolog 2 (rbfox2).